Consider the following 223-residue polypeptide: Probable cell wall protein PGA61 (223 aa).

The N-terminal stretch at 1–16 (MKSGLLLAVILPVAFA) is a signal peptide. N25 carries N-linked (GlcNAc...) asparagine glycosylation. The tract at residues 83–134 (GAPSSSSTPTSSTETTSSTEAETTEAETTEQPSSSTSSNTESSKTTILETPS) is disordered. Low complexity-rich tracts occupy residues 84 to 103 (APSS…STEA) and 111 to 128 (TEQP…SKTT). N188 carries N-linked (GlcNAc...) asparagine glycosylation. N202 carries the GPI-anchor amidated asparagine lipid modification. A propeptide spans 203-223 (GAGRAAVIGSGSLLALLLNFI) (removed in mature form).

This sequence belongs to the IHD1 family. The GPI-anchor is attached to the protein in the endoplasmic reticulum and serves to target the protein to the cell surface. There, the glucosamine-inositol phospholipid moiety is cleaved off and the GPI-modified mannoprotein is covalently attached via its lipidless GPI glycan remnant to the 1,6-beta-glucan of the outer cell wall layer.

Its subcellular location is the secreted. The protein localises to the cell wall. It is found in the membrane. In terms of biological role, probable GPI-anchored cell wall protein that may be involved in cell wall organization, hyphal growth, as well as in virulence. In Candida albicans (strain SC5314 / ATCC MYA-2876) (Yeast), this protein is Probable cell wall protein PGA61 (PGA61).